Consider the following 231-residue polypeptide: 7-cyano-7-deazaguanine synthase (231 aa).

Position 8-18 (8-18 (FSGGQDSTTCL)) interacts with ATP. Positions 188, 197, 200, and 203 each coordinate Zn(2+).

It belongs to the QueC family. It depends on Zn(2+) as a cofactor.

The enzyme catalyses 7-carboxy-7-deazaguanine + NH4(+) + ATP = 7-cyano-7-deazaguanine + ADP + phosphate + H2O + H(+). It functions in the pathway purine metabolism; 7-cyano-7-deazaguanine biosynthesis. In terms of biological role, catalyzes the ATP-dependent conversion of 7-carboxy-7-deazaguanine (CDG) to 7-cyano-7-deazaguanine (preQ(0)). In Salmonella newport (strain SL254), this protein is 7-cyano-7-deazaguanine synthase.